The primary structure comprises 508 residues: Cytochrome P450 monooxygenase pkfB (508 aa).

A helical transmembrane segment spans residues 9–29; sequence FSLGLSQILVCLALLYAAIHI. N-linked (GlcNAc...) asparagine glycosylation is found at Asn-57 and Asn-305. Cys-450 is a heme binding site.

Belongs to the cytochrome P450 family. The cofactor is heme.

The protein resides in the membrane. The protein operates within secondary metabolite biosynthesis. In terms of biological role, cytochrome P450 monooxygenase; part of the gene cluster that mediates the biosynthesis of aspernidine A, a prenylated isoindolinone. The starting point of the biosynthesis of aspernidin A is the production of orsellinaldehyde by the non-reducing polyketide synthase pkfA. Hydroxylation, methylation of one of the phenol groups, and prenylation, presumably catalyzed by the prenyltransferase pkfE, would be needed to yield aspernidine D. Subsequently, the cytochrome P450 monooxygenase pkfB is responsible for hydroxylation of aspernidine D to yield aspernidine E. The dehydrogenase pkfF may be responsible for further oxidation of aspernidine E to form a dialdehyde intermediate which is further transformed in a series of steps, some of which are enzyme-mediated, to generate aspernidine A. The possibility that additional enzymes outside of the cluster are involved in aspernidine A biosynthesis cannot be excluded. This chain is Cytochrome P450 monooxygenase pkfB, found in Emericella nidulans (strain FGSC A4 / ATCC 38163 / CBS 112.46 / NRRL 194 / M139) (Aspergillus nidulans).